Reading from the N-terminus, the 161-residue chain is Cyclic pyranopterin monophosphate synthase (161 aa).

Substrate is bound by residues 75 to 77 (LCH) and 113 to 114 (ME). The active site involves Asp128.

This sequence belongs to the MoaC family. Homohexamer; trimer of dimers.

It catalyses the reaction (8S)-3',8-cyclo-7,8-dihydroguanosine 5'-triphosphate = cyclic pyranopterin phosphate + diphosphate. The protein operates within cofactor biosynthesis; molybdopterin biosynthesis. Functionally, catalyzes the conversion of (8S)-3',8-cyclo-7,8-dihydroguanosine 5'-triphosphate to cyclic pyranopterin monophosphate (cPMP). The chain is Cyclic pyranopterin monophosphate synthase from Edwardsiella ictaluri (strain 93-146).